The chain runs to 703 residues: Elongation factor G 1 (703 aa).

Positions 8–290 constitute a tr-type G domain; sequence ERYRNIGISA…AVIDFLPSPV (283 aa). Residues 17–24, 88–92, and 142–145 contribute to the GTP site; these read AHIDAGKT, DTPGH, and NKMD.

It belongs to the TRAFAC class translation factor GTPase superfamily. Classic translation factor GTPase family. EF-G/EF-2 subfamily.

Its subcellular location is the cytoplasm. Its function is as follows. Catalyzes the GTP-dependent ribosomal translocation step during translation elongation. During this step, the ribosome changes from the pre-translocational (PRE) to the post-translocational (POST) state as the newly formed A-site-bound peptidyl-tRNA and P-site-bound deacylated tRNA move to the P and E sites, respectively. Catalyzes the coordinated movement of the two tRNA molecules, the mRNA and conformational changes in the ribosome. The sequence is that of Elongation factor G 1 from Cupriavidus metallidurans (strain ATCC 43123 / DSM 2839 / NBRC 102507 / CH34) (Ralstonia metallidurans).